A 192-amino-acid chain; its full sequence is uncharacterized protein (192 aa).

In terms of domain architecture, Nudix hydrolase spans 29 to 160 (QRQAAVLVPI…PLDIHRRGND (132 aa)). Positions 67-89 (GAVDNTDATLIAAALREAQEEVA) match the Nudix box motif. Residues glutamate 83 and glutamate 87 each contribute to the Mg(2+) site.

It belongs to the Nudix hydrolase family. PCD1 subfamily. Requires Mn(2+) as cofactor. Mg(2+) serves as cofactor.

Probably mediates the hydrolysis of some nucleoside diphosphate derivatives. This is an uncharacterized protein from Klebsiella pneumoniae (strain 342).